We begin with the raw amino-acid sequence, 137 residues long: Large ribosomal subunit protein uL16 (137 aa).

It belongs to the universal ribosomal protein uL16 family. Part of the 50S ribosomal subunit.

Binds 23S rRNA and is also seen to make contacts with the A and possibly P site tRNAs. In Ruegeria sp. (strain TM1040) (Silicibacter sp.), this protein is Large ribosomal subunit protein uL16.